The sequence spans 556 residues: Arginine--tRNA ligase (556 aa).

The short motif at 133–143 (ANPTGPIHIGH) is the 'HIGH' region element.

This sequence belongs to the class-I aminoacyl-tRNA synthetase family. In terms of assembly, monomer.

The protein resides in the cytoplasm. It carries out the reaction tRNA(Arg) + L-arginine + ATP = L-arginyl-tRNA(Arg) + AMP + diphosphate. The sequence is that of Arginine--tRNA ligase from Dehalococcoides mccartyi (strain ATCC BAA-2100 / JCM 16839 / KCTC 5957 / BAV1).